The primary structure comprises 374 residues: Chaperone protein DnaJ (374 aa).

Residues aspartate 5–glycine 70 form the J domain. The CR-type zinc finger occupies glycine 129–serine 207. Cysteine 142, cysteine 145, cysteine 159, cysteine 162, cysteine 181, cysteine 184, cysteine 195, and cysteine 198 together coordinate Zn(2+). CXXCXGXG motif repeat units lie at residues cysteine 142–glycine 149, cysteine 159–glycine 166, cysteine 181–glycine 188, and cysteine 195–glycine 202.

It belongs to the DnaJ family. In terms of assembly, homodimer. Requires Zn(2+) as cofactor.

Its subcellular location is the cytoplasm. Its function is as follows. Participates actively in the response to hyperosmotic and heat shock by preventing the aggregation of stress-denatured proteins and by disaggregating proteins, also in an autonomous, DnaK-independent fashion. Unfolded proteins bind initially to DnaJ; upon interaction with the DnaJ-bound protein, DnaK hydrolyzes its bound ATP, resulting in the formation of a stable complex. GrpE releases ADP from DnaK; ATP binding to DnaK triggers the release of the substrate protein, thus completing the reaction cycle. Several rounds of ATP-dependent interactions between DnaJ, DnaK and GrpE are required for fully efficient folding. Also involved, together with DnaK and GrpE, in the DNA replication of plasmids through activation of initiation proteins. This Sodalis glossinidius (strain morsitans) protein is Chaperone protein DnaJ.